Reading from the N-terminus, the 156-residue chain is Aspartate 1-decarboxylase (156 aa).

The active-site Schiff-base intermediate with substrate; via pyruvic acid is Ser-26. At Ser-26 the chain carries Pyruvic acid (Ser). Residue Thr-58 coordinates substrate. The Proton donor role is filled by Tyr-59. 74 to 76 (GGA) is a binding site for substrate.

This sequence belongs to the PanD family. As to quaternary structure, heterooctamer of four alpha and four beta subunits. Pyruvate is required as a cofactor. Post-translationally, is synthesized initially as an inactive proenzyme, which is activated by self-cleavage at a specific serine bond to produce a beta-subunit with a hydroxyl group at its C-terminus and an alpha-subunit with a pyruvoyl group at its N-terminus.

The protein resides in the cytoplasm. It catalyses the reaction L-aspartate + H(+) = beta-alanine + CO2. It functions in the pathway cofactor biosynthesis; (R)-pantothenate biosynthesis; beta-alanine from L-aspartate: step 1/1. Its function is as follows. Catalyzes the pyruvoyl-dependent decarboxylation of aspartate to produce beta-alanine. The chain is Aspartate 1-decarboxylase from Gloeothece citriformis (strain PCC 7424) (Cyanothece sp. (strain PCC 7424)).